We begin with the raw amino-acid sequence, 754 residues long: Polyribonucleotide nucleotidyltransferase (754 aa).

Mg(2+) contacts are provided by aspartate 525 and aspartate 531. In terms of domain architecture, KH spans 591-650 (PRITTIKVPVDKIGEVIGPKGKMINSITEETGASISIEDDGTVFVGASNGEAAQAAIDKI). The S1 motif domain occupies 662–731 (GERFLGTVVK…NRGKISLVLV (70 aa)).

It belongs to the polyribonucleotide nucleotidyltransferase family. Requires Mg(2+) as cofactor.

Its subcellular location is the cytoplasm. It catalyses the reaction RNA(n+1) + phosphate = RNA(n) + a ribonucleoside 5'-diphosphate. Its function is as follows. Involved in mRNA degradation. Catalyzes the phosphorolysis of single-stranded polyribonucleotides processively in the 3'- to 5'-direction. The polypeptide is Polyribonucleotide nucleotidyltransferase (Mycolicibacterium vanbaalenii (strain DSM 7251 / JCM 13017 / BCRC 16820 / KCTC 9966 / NRRL B-24157 / PYR-1) (Mycobacterium vanbaalenii)).